The primary structure comprises 81 residues: Photosystem I iron-sulfur center (81 aa).

4Fe-4S ferredoxin-type domains lie at 2–31 (AHSV…MIPW) and 39–68 (IASA…VRVY). 8 residues coordinate [4Fe-4S] cluster: Cys11, Cys14, Cys17, Cys21, Cys48, Cys51, Cys54, and Cys58.

The eukaryotic PSI reaction center is composed of at least 11 subunits. [4Fe-4S] cluster is required as a cofactor.

Its subcellular location is the plastid. It localises to the chloroplast thylakoid membrane. The catalysed reaction is reduced [plastocyanin] + hnu + oxidized [2Fe-2S]-[ferredoxin] = oxidized [plastocyanin] + reduced [2Fe-2S]-[ferredoxin]. Apoprotein for the two 4Fe-4S centers FA and FB of photosystem I (PSI); essential for photochemical activity. FB is the terminal electron acceptor of PSI, donating electrons to ferredoxin. The C-terminus interacts with PsaA/B/D and helps assemble the protein into the PSI complex. Required for binding of PsaD and PsaE to PSI. PSI is a plastocyanin-ferredoxin oxidoreductase, converting photonic excitation into a charge separation, which transfers an electron from the donor P700 chlorophyll pair to the spectroscopically characterized acceptors A0, A1, FX, FA and FB in turn. The protein is Photosystem I iron-sulfur center of Pinus thunbergii (Japanese black pine).